The primary structure comprises 200 residues: GTP cyclohydrolase 1 (200 aa).

Residues cysteine 87, histidine 90, and cysteine 158 each coordinate Zn(2+).

This sequence belongs to the GTP cyclohydrolase I family. As to quaternary structure, toroid-shaped homodecamer, composed of two pentamers of five dimers.

The catalysed reaction is GTP + H2O = 7,8-dihydroneopterin 3'-triphosphate + formate + H(+). It functions in the pathway cofactor biosynthesis; 7,8-dihydroneopterin triphosphate biosynthesis; 7,8-dihydroneopterin triphosphate from GTP: step 1/1. The chain is GTP cyclohydrolase 1 from Xanthomonas axonopodis pv. citri (strain 306).